Reading from the N-terminus, the 66-residue chain is Large ribosomal subunit protein bL32 (66 aa).

It belongs to the bacterial ribosomal protein bL32 family.

The chain is Large ribosomal subunit protein bL32 from Rickettsia akari (strain Hartford).